Reading from the N-terminus, the 264-residue chain is Tryptophan synthase alpha chain (264 aa).

Residues Glu-49 and Asp-60 each act as proton acceptor in the active site.

This sequence belongs to the TrpA family. Tetramer of two alpha and two beta chains.

The enzyme catalyses (1S,2R)-1-C-(indol-3-yl)glycerol 3-phosphate + L-serine = D-glyceraldehyde 3-phosphate + L-tryptophan + H2O. It participates in amino-acid biosynthesis; L-tryptophan biosynthesis; L-tryptophan from chorismate: step 5/5. Its function is as follows. The alpha subunit is responsible for the aldol cleavage of indoleglycerol phosphate to indole and glyceraldehyde 3-phosphate. This is Tryptophan synthase alpha chain from Picosynechococcus sp. (strain ATCC 27264 / PCC 7002 / PR-6) (Agmenellum quadruplicatum).